Here is a 360-residue protein sequence, read N- to C-terminus: Putative F-box protein At1g65770 (360 aa).

The F-box domain maps to 2 to 50 (ADWSTLPVDLLNMIAGRLFSNIELKRFRSICRSWRSSVPGAGKKNPFRT).

This chain is Putative F-box protein At1g65770, found in Arabidopsis thaliana (Mouse-ear cress).